The following is a 580-amino-acid chain: 2-succinyl-5-enolpyruvyl-6-hydroxy-3-cyclohexene-1-carboxylate synthase (580 aa).

The protein belongs to the TPP enzyme family. MenD subfamily. Homodimer. The cofactor is Mg(2+). It depends on Mn(2+) as a cofactor. Thiamine diphosphate is required as a cofactor.

The catalysed reaction is isochorismate + 2-oxoglutarate + H(+) = 5-enolpyruvoyl-6-hydroxy-2-succinyl-cyclohex-3-ene-1-carboxylate + CO2. The protein operates within quinol/quinone metabolism; 1,4-dihydroxy-2-naphthoate biosynthesis; 1,4-dihydroxy-2-naphthoate from chorismate: step 2/7. Its pathway is quinol/quinone metabolism; menaquinone biosynthesis. Catalyzes the thiamine diphosphate-dependent decarboxylation of 2-oxoglutarate and the subsequent addition of the resulting succinic semialdehyde-thiamine pyrophosphate anion to isochorismate to yield 2-succinyl-5-enolpyruvyl-6-hydroxy-3-cyclohexene-1-carboxylate (SEPHCHC). The protein is 2-succinyl-5-enolpyruvyl-6-hydroxy-3-cyclohexene-1-carboxylate synthase of Listeria innocua serovar 6a (strain ATCC BAA-680 / CLIP 11262).